Reading from the N-terminus, the 330-residue chain is Lipoyl synthase (330 aa).

[4Fe-4S] cluster-binding residues include cysteine 77, cysteine 82, cysteine 88, cysteine 103, cysteine 107, cysteine 110, and serine 317. The Radical SAM core domain maps to 89 to 306 (FNHGTATFMI…RSEAEKMGFE (218 aa)).

The protein belongs to the radical SAM superfamily. Lipoyl synthase family. [4Fe-4S] cluster serves as cofactor.

Its subcellular location is the cytoplasm. It catalyses the reaction [[Fe-S] cluster scaffold protein carrying a second [4Fe-4S](2+) cluster] + N(6)-octanoyl-L-lysyl-[protein] + 2 oxidized [2Fe-2S]-[ferredoxin] + 2 S-adenosyl-L-methionine + 4 H(+) = [[Fe-S] cluster scaffold protein] + N(6)-[(R)-dihydrolipoyl]-L-lysyl-[protein] + 4 Fe(3+) + 2 hydrogen sulfide + 2 5'-deoxyadenosine + 2 L-methionine + 2 reduced [2Fe-2S]-[ferredoxin]. It functions in the pathway protein modification; protein lipoylation via endogenous pathway; protein N(6)-(lipoyl)lysine from octanoyl-[acyl-carrier-protein]: step 2/2. Its function is as follows. Catalyzes the radical-mediated insertion of two sulfur atoms into the C-6 and C-8 positions of the octanoyl moiety bound to the lipoyl domains of lipoate-dependent enzymes, thereby converting the octanoylated domains into lipoylated derivatives. The chain is Lipoyl synthase from Haemophilus ducreyi (strain 35000HP / ATCC 700724).